Consider the following 1754-residue polypeptide: Collagen alpha-1(XVIII) chain (1754 aa).

The N-terminal stretch at 1 to 23 (MAPYPCGCHILLLLFCCLAAARA) is a signal peptide. The tract at residues 42-104 (ATTIPEPQGP…TSAESPDAPE (63 aa)) is disordered. The segment covering 57–73 (TADTTTHVTPRNGSTEP) has biased composition (polar residues). N-linked (GlcNAc...) asparagine glycans are attached at residues Asn-68, Asn-129, and Asn-164. Residues 152 to 256 (LALAGPSSTP…APSQQLQRPD (105 aa)) form a disordered region. Over residues 157 to 169 (PSSTPQENGTTLW) the composition is skewed to polar residues. Low complexity predominate over residues 215–253 (SGRASLSSLLGGAPPWGSLQDPDSQGLSPAAAAPSQQLQ). In terms of domain architecture, FZ spans 329-446 (APAGRCLPLP…TQEDGYCVLI (118 aa)). 5 disulfide bridges follow: Cys-334/Cys-397, Cys-344/Cys-390, Cys-381/Cys-419, Cys-408/Cys-443, and Cys-412/Cys-432. Positions 456 to 644 (EVGLLQLLGD…IAELKVRRDP (189 aa)) constitute a Laminin G-like domain. Residues 645 to 751 (QVSPMHCLDE…RTPGGRVKEG (107 aa)) form a nonhelical region 1 (NC1) region. The disordered stretch occupies residues 645–1443 (QVSPMHCLDE…GPPGTMGASS (799 aa)). A compositionally biased stretch (basic and acidic residues) spans 672-681 (DARELLREET). Position 696 is a phosphothreonine (Thr-696). The span at 717-738 (QTTVASLGAQTLPGSDSVSTWD) shows a compositional bias: polar residues. The tract at residues 752–785 (GLKGQKGEPGVPGPPGRAGPPGSPCLPGPPGLPC) is triple-helical region 1 (COL1). A compositionally biased stretch (pro residues) spans 762-789 (VPGPPGRAGPPGSPCLPGPPGLPCPVSP). A nonhelical region 2 (NC2) region spans residues 786–795 (PVSPLGPAGP). The segment at 796 to 875 (ALQTVPGPQG…QGPPGPPGPS (80 aa)) is triple-helical region 2 (COL2). Residues 815–831 (TPGRDGEPGDPGEDGKP) show a composition bias toward basic and acidic residues. The segment covering 833 to 846 (DTGPQGFPGTPGDV) has biased composition (low complexity). Residues 862–874 (PPGPQGPPGPPGP) show a composition bias toward pro residues. Positions 876-899 (FRHDKLTFIDMEGSGFGGDLEALR) are nonhelical region 3 (NC3). Residue Ser-889 is glycosylated (O-linked (Xyl...) (chondroitin sulfate) serine). Residues 900–1021 (GPRGFPGPPG…PGPPGPPGPG (122 aa)) are triple-helical region 3 (COL3). The segment covering 904–914 (FPGPPGPPGVP) has biased composition (pro residues). A glycan (N-linked (GlcNAc...) asparagine) is linked at Asn-926. The segment covering 930-942 (VPGPAGLPGVPGR) has biased composition (low complexity). The segment covering 946–961 (PGFPGLPGPPGPPGRE) has biased composition (pro residues). Low complexity predominate over residues 976–1003 (AGAPGHKGSKGAPGPAGARGESGLAGAP). Positions 1005-1021 (PAGPPGPPGPPGPPGPG) are enriched in pro residues. The nonhelical region 4 (NC4) stretch occupies residues 1022 to 1044 (LPAGFDDMEGSGGPFWSTARSAD). Positions 1045–1127 (GPQGPPGLPG…PGPPGPPGPV (83 aa)) are triple-helical region 4 (COL4). The span at 1053–1065 (PGLKGDPGVPGLP) shows a compositional bias: low complexity. Residues 1095–1109 (KGDRGSRGEKGDPGK) are compositionally biased toward basic and acidic residues. Residues 1117-1126 (LPGPPGPPGP) are compositionally biased toward pro residues. Residues 1128-1141 (VYVSEQDGSVLSVP) form a nonhelical region 5 (NC5) region. Over residues 1141 to 1153 (PGPEGRPGFAGFP) the composition is skewed to low complexity. Residues 1142 to 1183 (GPEGRPGFAGFPGPAGPKGNLGSKGERGSPGPKGEKGEPGSI) are triple-helical region 5 (COL5). Residues 1184–1196 (FSPDGGALGPAQK) are nonhelical region 6 (NC6). The triple-helical region 6 (COL6) stretch occupies residues 1197 to 1269 (GAKGEPGFRG…PGPPGPPGTP (73 aa)). Residues 1254–1268 (PGPPGPPGPPGPPGT) are compositionally biased toward pro residues. Positions 1270-1279 (VYDSNVFAES) are nonhelical region 7 (NC7). The triple-helical region 7 (COL7) stretch occupies residues 1280–1312 (SRPGPPGLPGNQGPPGPKGAKGEVGPPGPPGQF). Residues 1282–1296 (PGPPGLPGNQGPPGP) show a composition bias toward pro residues. Residues 1313 to 1324 (PFDFLQLEAEMK) are nonhelical region 8 (NC8). The segment covering 1321–1341 (AEMKGEKGDRGDAGQKGERGE) has biased composition (basic and acidic residues). The triple-helical region 8 (COL8) stretch occupies residues 1325-1346 (GEKGDRGDAGQKGERGEPGGGG). The short motif at 1330-1332 (RGD) is the Cell attachment site element. The nonhelical region 9 (NC9) stretch occupies residues 1347-1353 (FFGSSLP). Composition is skewed to pro residues over residues 1353–1365 (PGPP…PGPR), 1401–1414 (PPGP…PSFP), and 1424–1436 (PGPP…PGPP). Residues 1354-1411 (GPPGPPGPPGPRGYPGIPGPKGESIRGQPGPPGPQGPPGIGYEGRQGPPGPPGPPGPP) form a triple-helical region 9 (COL9) region. Residues 1412–1424 (SFPGPHRQTISVP) form a nonhelical region 10 (NC10) region. Positions 1425-1442 (GPPGPPGPPGPPGTMGAS) are triple-helical region 10 (COL10). The tract at residues 1443–1754 (SGVRLWATRQ…IENSFMTASK (312 aa)) is nonhelical region 11 (NC11). The segment at 1456 to 1501 (GQVHEVPEGWLIFVAEQEELYVRVQNGFRKVQLEARTPLPRGTDNE) is non-collagenous domain 1 association domain. The non-collagenous domain 1 hinge region stretch occupies residues 1502–1571 (VAALQPPVVQ…RPARPTSPPA (70 aa)). Residues 1511–1556 (QLHDSNPYPRREHPHPTARPWRADDILASPPRLPEPQPYPGAPHHS) are disordered. Basic and acidic residues predominate over residues 1519–1535 (PRREHPHPTARPWRADD). Over residues 1541 to 1551 (PRLPEPQPYPG) the composition is skewed to pro residues. The O-linked (GalNAc...) threonine glycan is linked to Thr-1567. Residues His-1572, His-1574, His-1582, and Asp-1647 each coordinate Zn(2+). Disulfide bonds link Cys-1604–Cys-1744 and Cys-1706–Cys-1736.

It belongs to the multiplexin collagen family. As to quaternary structure, forms homotrimers. Recombinant non-collagenous domain 1 has stronger affinity to NID1, HSPG2 and laminin-1:NID1 complex and lower affinity to FBLN1 and FBLN2 than endostatin. In terms of assembly, monomeric. Interacts with KDR/VEGFR2. Interacts with the ITGA5:ITGB1 complex. Interacts with NID1, HSPG2, laminin-1:NID1 complex, FBLN1 and FBLN2. In terms of processing, prolines at the third position of the tripeptide repeating unit (G-X-Y) of the triple-helical regions are hydroxylated. Circulating endostatins are found as sialoglycoprotein and asialoglycoprotein structures. Post-translationally, undergoes proteolytic processing by CTSL/cathepsin-L and elastase-like proteases to generate both non-collagenous domain 1 trimers and endostatin monomers. In tissue extracts (brain, skeletal muscle, heart, kidney, testis and liver) predominantly bands of approximately 38 kDa are detected; recombinant non-collagenous domain 1 shows similar mobility. In vitro, several proteolytic cleavage sites in the non-collagenous domain 1 hinge region generating different endostatin-like peptides are reported. As to expression, detected in placenta (at protein level). Present in multiple organs with highest levels in liver, lung and kidney.

The protein localises to the secreted. Its subcellular location is the extracellular space. It is found in the extracellular matrix. It localises to the basement membrane. Its function is as follows. Probably plays a major role in determining the retinal structure as well as in the closure of the neural tube. Functionally, may regulate extracellular matrix-dependent motility and morphogenesis of endothelial and non-endothelial cells; the function requires homotrimerization and implicates MAPK signaling. Potently inhibits endothelial cell proliferation and angiogenesis. May inhibit angiogenesis by binding to the heparan sulfate proteoglycans involved in growth factor signaling. Inhibits VEGFA-induced endothelial cell proliferation and migration. Seems to inhibit VEGFA-mediated signaling by blocking the interaction of VEGFA to its receptor KDR/VEGFR2. Modulates endothelial cell migration in an integrin-dependent manner implicating integrin ITGA5:ITGB1 and to a lesser extent ITGAV:ITGB3 and ITGAV:ITGB5. May negatively regulate the activity of homotrimeric non-collagenous domain 1. This is Collagen alpha-1(XVIII) chain from Homo sapiens (Human).